A 440-amino-acid polypeptide reads, in one-letter code: Suppressor of cytokine signaling 4 (440 aa).

Positions 1-11 are enriched in polar residues; that stretch reads MAENSESNSKN. The segment at 1–29 is disordered; it reads MAENSESNSKNVDVRPKTSRSRSADRKDG. Positions 12-29 are enriched in basic and acidic residues; the sequence is VDVRPKTSRSRSADRKDG. One can recognise an SH2 domain in the interval 286-381; that stretch reads CYWGVMDKYA…FFEPLLSTPL (96 aa). The region spanning 376-425 is the SOCS box domain; sequence LLSTPLIRTFPFSLQHICRTVICNCTTYDGIDALPIPSSMKLYLKEYHYK.

It participates in protein modification; protein ubiquitination. In terms of biological role, SOCS family proteins form part of a classical negative feedback system that regulates cytokine signal transduction. Substrate-recognition component of a SCF-like ECS (Elongin BC-CUL2/5-SOCS-box protein) E3 ubiquitin-protein ligase complex which mediates the ubiquitination and subsequent proteasomal degradation of target proteins. Inhibits EGF signaling by mediating the degradation of the Tyr-phosphorylated EGF receptor/EGFR. This is Suppressor of cytokine signaling 4 (SOCS4) from Bos taurus (Bovine).